Here is a 322-residue protein sequence, read N- to C-terminus: MPLNKSNIREYKLVVVGGGGVGKSALTIQLTQSHFVDEYDPTIEDSYRKQVVIDDEVSILDILDTAGQEEYSAMREQYMRNGEGFLLVYSITSKSSLDELMTYYQQILRVKDTDYVPIVVVGNKSDLENEKQVSYQDGLNMAKQMNAPFLETSAKQAINVEEAFYTLARLVRDEGGKYNKTLTENDNSKQTSQDTKGSGANSVPRNSGGHRKMSNAANGKNVNSSTTVVNARNASIESKTGLAGNQATNGKTQTDRTNIDNSTGQAGQANAQSANTVNNRVNNNSKAGQVSNAKQARKQQAAPGGNTSEASKSGSGGCCIIS.

GTP contacts are provided by residues 20 to 25, 36 to 42, 66 to 67, and 123 to 126; these read GVGKSA, VDEYDPT, AG, and NKSD. Residues 39 to 47 carry the Effector region motif; sequence YDPTIEDSY. A Glycyl lysine isopeptide (Lys-Gly) (interchain with G-Cter in ubiquitin) cross-link involves residue K131. 153–155 is a binding site for GTP; it reads SAK. Residues 178-322 are disordered; sequence YNKTLTENDN…SGSGGCCIIS (145 aa). Positions 180 to 205 are enriched in polar residues; sequence KTLTENDNSKQTSQDTKGSGANSVPR. Phosphoserine is present on residues S198, S202, S207, S214, S235, and S238. The segment covering 215–252 has biased composition (polar residues); that stretch reads NAANGKNVNSSTTVVNARNASIESKTGLAGNQATNGKT. Over residues 261-284 the composition is skewed to low complexity; it reads NSTGQAGQANAQSANTVNNRVNNN. A compositionally biased stretch (polar residues) spans 285 to 294; sequence SKAGQVSNAK. Residue C318 is the site of S-palmitoyl cysteine attachment. C319 is subject to Cysteine methyl ester. C319 is lipidated: S-farnesyl cysteine. Positions 320 to 322 are cleaved as a propeptide — removed in mature form; that stretch reads IIS.

Belongs to the small GTPase superfamily. Ras family. Post-translationally, farnesylated by RAM1-RAM2, which is required for targeting RAS2 to the cytoplasmic site of the endoplasmic reticulum, where proteolytic processing of the C-terminus by RCE1 and methylation of the resulting carboxyl group by STE14 occurs. In terms of processing, palmitoylated by the ERF2-SHR5 complex, which is required for proper plasma membrane localization of RAS2.

Its subcellular location is the cell membrane. It catalyses the reaction GTP + H2O = GDP + phosphate + H(+). With respect to regulation, alternates between an inactive form bound to GDP and an active form bound to GTP. Activated by guanine nucleotide-exchange factor (GEF) CDC25 and inactivated by GTPase-activating proteins (GAPs) IRA1 and IRA2. Functionally, the S.cerevisiae Ras proteins modulate the activity of the adenylate cyclase catalytic subunit and therefore affect the biosynthesis of cyclic-AMP. The polypeptide is Ras-like protein 2 (RAS2) (Saccharomyces cerevisiae (strain ATCC 204508 / S288c) (Baker's yeast)).